Reading from the N-terminus, the 103-residue chain is Co-chaperonin GroES (103 aa).

Belongs to the GroES chaperonin family. As to quaternary structure, heptamer of 7 subunits arranged in a ring. Interacts with the chaperonin GroEL.

It localises to the plastid. It is found in the cyanelle. Its function is as follows. Together with the chaperonin GroEL, plays an essential role in assisting protein folding. The GroEL-GroES system forms a nano-cage that allows encapsulation of the non-native substrate proteins and provides a physical environment optimized to promote and accelerate protein folding. GroES binds to the apical surface of the GroEL ring, thereby capping the opening of the GroEL channel. The sequence is that of Co-chaperonin GroES from Cyanophora paradoxa.